A 389-amino-acid polypeptide reads, in one-letter code: 3-ketoacyl-CoA thiolase (389 aa).

The active-site Acyl-thioester intermediate is the Cys91. Catalysis depends on proton acceptor residues His343 and Cys373.

Belongs to the thiolase-like superfamily. Thiolase family. In terms of assembly, heterotetramer of two alpha chains (FadB) and two beta chains (FadA).

Its subcellular location is the cytoplasm. It carries out the reaction an acyl-CoA + acetyl-CoA = a 3-oxoacyl-CoA + CoA. Its pathway is lipid metabolism; fatty acid beta-oxidation. Functionally, catalyzes the final step of fatty acid oxidation in which acetyl-CoA is released and the CoA ester of a fatty acid two carbons shorter is formed. The chain is 3-ketoacyl-CoA thiolase from Pseudoalteromonas translucida (strain TAC 125).